We begin with the raw amino-acid sequence, 353 residues long: T-complex protein 1 subunit eta (353 aa).

This sequence belongs to the TCP-1 chaperonin family. Heterooligomeric complex of about 850 to 900 kDa that forms two stacked rings, 12 to 16 nm in diameter.

The protein resides in the cytoplasm. Functionally, molecular chaperone; assists the folding of proteins upon ATP hydrolysis. Known to play a role, in vitro, in the folding of actin and tubulin. In Tetrahymena thermophila, this protein is T-complex protein 1 subunit eta.